A 195-amino-acid chain; its full sequence is Adenylate kinase (195 aa).

10-15 (GAGKGT) contacts ATP. The segment at 30 to 59 (STGDMLRAAVAAGTPVGLKAKAVMDAGGLV) is NMP. AMP contacts are provided by residues Thr31, Arg36, 57–59 (GLV), 85–88 (GFPR), and Gln92. Residues 126-143 (NRAAEAQAKGEAVRKDDD) form an LID region. Residue Arg127 participates in ATP binding. Arg150 provides a ligand contact to AMP. Residue Ala178 coordinates ATP.

Belongs to the adenylate kinase family. In terms of assembly, monomer.

It is found in the cytoplasm. It catalyses the reaction AMP + ATP = 2 ADP. Its pathway is purine metabolism; AMP biosynthesis via salvage pathway; AMP from ADP: step 1/1. Its function is as follows. Catalyzes the reversible transfer of the terminal phosphate group between ATP and AMP. Plays an important role in cellular energy homeostasis and in adenine nucleotide metabolism. This chain is Adenylate kinase, found in Xanthobacter autotrophicus (strain ATCC BAA-1158 / Py2).